The following is a 469-amino-acid chain: Acetyl-CoA decarbonylase/synthase complex subunit beta 2 (469 aa).

[Ni-Fe-S] cluster is bound by residues Cys187, Cys190, Cys276, and Cys278.

The protein belongs to the CdhC family. Monomer. The ACDS complex is made up of alpha, epsilon, beta, gamma and delta chains with a probable stoichiometry of (alpha(2)epsilon(2))(4)-beta(8)-(gamma(1)delta(1))(8) (Potential). [Ni-Fe-S] cluster is required as a cofactor.

The enzyme catalyses Co(I)-[corrinoid Fe-S protein] + acetyl-CoA + H(+) = methyl-Co(III)-[corrinoid Fe-S protein] + CO + CoA. Part of a complex that catalyzes the reversible cleavage of acetyl-CoA, allowing autotrophic growth from CO(2). The alpha-epsilon complex generates CO from CO(2), while the beta subunit (this protein) combines the CO with CoA and a methyl group to form acetyl-CoA. The methyl group, which is incorporated into acetyl-CoA, is transferred to the beta subunit by a corrinoid iron-sulfur protein (the gamma-delta complex). This chain is Acetyl-CoA decarbonylase/synthase complex subunit beta 2 (cdhC2), found in Methanocaldococcus jannaschii (strain ATCC 43067 / DSM 2661 / JAL-1 / JCM 10045 / NBRC 100440) (Methanococcus jannaschii).